The sequence spans 413 residues: Monacolin J acid methylbutanoyltransferase (413 aa).

Arg-73 is a monacolin J binding site. Ser-76 functions as the Acyl-ester intermediate in the catalytic mechanism. Monacolin J-binding residues include Arg-173, Tyr-188, and Tyr-258. Position 366 (Gly-366) interacts with 2-methylbutanoate. 2 residues coordinate monacolin J: Glu-388 and Trp-390.

The protein belongs to the class-A beta-lactamase family. Interacts with LovF.

The enzyme catalyses monacolin J carboxylate + (S)-2-methylbutanoyl-[2-methylbutanoate polyketide synthase] = lovastatin carboxylate + holo-[2-methylbutanoate polyketide synthase]. It participates in polyketide biosynthesis; lovastatin biosynthesis. Monacolin J acid methylbutanoyltransferase; part of the gene cluster that mediates the biosynthesis of lovastatin (also known as mevinolin, mevacor or monacolin K), a hypolipidemic inhibitor of (3S)-hydroxymethylglutaryl-coenzyme A (HMG-CoA) reductase (HMGR). The first step in the biosynthesis of lovastatin is the production of dihydromonacolin L acid by the lovastatin nonaketide synthase lovB and the trans-acting enoyl reductase lovC via condensation of one acetyl-CoA unit and 8 malonyl-CoA units. Dihydromonacolin L acid is released from lovB by the thioesterase lovG. Next, dihydromonacolin L acid is oxidized by the dihydromonacolin L monooxygenase lovA twice to form monacolin J acid. The 2-methylbutyrate moiety of lovastatin is synthesized by the lovastatin diketide synthase lovF via condensation of one acetyl-CoA unit and one malonyl-CoA unit. Finally, the covalent attachment of this moiety to monacolin J acid is catalyzed by the transesterase lovD to yield lovastatin. LovD has broad substrate specificity and can also convert monacolin J to simvastatin using alpha-dimethylbutanoyl-S-methyl-3-mercaptopropionate (DMB-S-MMP) as the thioester acyl donor, and can also catalyze the reverse reaction and function as hydrolase in vitro. LovD has much higher activity with LovF-bound 2-methylbutanoate than with free diketide substrates. The polypeptide is Monacolin J acid methylbutanoyltransferase (Aspergillus terreus).